The following is a 324-amino-acid chain: Glyoxylate/hydroxypyruvate reductase B (324 aa).

Active-site residues include arginine 237 and glutamate 266. Histidine 285 serves as the catalytic Proton donor.

Belongs to the D-isomer specific 2-hydroxyacid dehydrogenase family. GhrB subfamily. As to quaternary structure, homodimer.

The protein localises to the cytoplasm. It catalyses the reaction glycolate + NADP(+) = glyoxylate + NADPH + H(+). The catalysed reaction is (R)-glycerate + NAD(+) = 3-hydroxypyruvate + NADH + H(+). It carries out the reaction (R)-glycerate + NADP(+) = 3-hydroxypyruvate + NADPH + H(+). Its function is as follows. Catalyzes the NADPH-dependent reduction of glyoxylate and hydroxypyruvate into glycolate and glycerate, respectively. In Salmonella typhi, this protein is Glyoxylate/hydroxypyruvate reductase B.